A 451-amino-acid chain; its full sequence is Exodeoxyribonuclease 7 large subunit (451 aa).

The protein belongs to the XseA family. Heterooligomer composed of large and small subunits.

It is found in the cytoplasm. It carries out the reaction Exonucleolytic cleavage in either 5'- to 3'- or 3'- to 5'-direction to yield nucleoside 5'-phosphates.. Functionally, bidirectionally degrades single-stranded DNA into large acid-insoluble oligonucleotides, which are then degraded further into small acid-soluble oligonucleotides. The chain is Exodeoxyribonuclease 7 large subunit from Bacillus cytotoxicus (strain DSM 22905 / CIP 110041 / 391-98 / NVH 391-98).